The sequence spans 591 residues: PDZ and LIM domain protein 5 (591 aa).

Residue serine 2 is modified to N-acetylserine. Serine 2 is modified (phosphoserine). The 84-residue stretch at 2–85 (SNYSVSLVGP…SLNMTLQRAS (84 aa)) folds into the PDZ domain. The residue at position 89 (lysine 89) is an N6-acetyllysine; alternate. Lysine 89 is subject to N6-succinyllysine; alternate. Residue lysine 89 forms a Glycyl lysine isopeptide (Lys-Gly) (interchain with G-Cter in SUMO2); alternate linkage. 5 positions are modified to phosphoserine: glutamate 102, lysine 105, serine 111, serine 134, and serine 137. Disordered stretches follow at residues 121–166 (TNMA…PTPV) and 186–398 (SADQ…DQDT). Residues 134–143 (SVSSPKVTSI) show a composition bias toward polar residues. The span at 144 to 166 (PSPSSAFTPAHAATSSHASPTPV) shows a compositional bias: low complexity. Composition is skewed to polar residues over residues 186–195 (SADQCSSPPN) and 205–217 (RQPTVTSVCSESA). A phosphoserine mark is found at glutamine 218, serine 228, and serine 260. 2 stretches are compositionally biased toward basic and acidic residues: residues 258-273 (DASKKRLIEDTEDWRP) and 294-304 (HLTESENDNTK). Low complexity predominate over residues 310–339 (QEPSQQPASSGASPLSASEGPESPGSSRPS). Residues serine 313, proline 316, and serine 322 each carry the phosphoserine modification. Residue lysine 350 is modified to N6-acetyllysine. Residues 353–385 (GSTSVKSPSWQRPNQAAPSTGRISNNARSSGTG) show a composition bias toward polar residues. A phosphoserine mark is found at serine 359 and serine 361. 3 consecutive LIM zinc-binding domains span residues 413–472 (PMCA…FFAP), 472–531 (PECG…LFGT), and 531–591 (TICR…SVNF).

Interacts with various PKC isoforms through the LIM domains. Interacts with actin and alpha-actinin through the PDZ domain. Interacts (via LIM domains) with SIPA1L1/SPAR; this interaction may occur preferentially with isoform 1.

It is found in the postsynaptic density. The protein resides in the presynapse. It localises to the postsynapse. The protein localises to the cytoplasm. Its subcellular location is the cytosol. In terms of biological role, may play an important role in the heart development by scaffolding PKC to the Z-disk region. May play a role in the regulation of cardiomyocyte expansion. Isoforms lacking the LIM domains may negatively modulate the scaffolding activity of isoform 1. Overexpression promotes the development of heart hypertrophy. Contributes to the regulation of dendritic spine morphogenesis in neurons. May be required to restrain postsynaptic growth of excitatory synapses. Isoform 1, but not isoform 2, expression favors spine thinning and elongation. The chain is PDZ and LIM domain protein 5 from Mus musculus (Mouse).